Reading from the N-terminus, the 148-residue chain is Hemoglobin subunit beta (148 aa).

The 146-residue stretch at 3-148 (DWTDAERSAI…VVSALGRQYH (146 aa)) folds into the Globin domain. The heme b site is built by H64 and H93.

Belongs to the globin family. As to quaternary structure, heterotetramer of two alpha chains and two beta chains. As to expression, red blood cells.

Its function is as follows. Involved in oxygen transport from gills to the various peripheral tissues. The chain is Hemoglobin subunit beta (hbb) from Salmo salar (Atlantic salmon).